Here is a 70-residue protein sequence, read N- to C-terminus: uncharacterized protein (70 aa).

This is an uncharacterized protein from Escherichia coli (strain K12).